Reading from the N-terminus, the 354-residue chain is Elongation factor Ts (354 aa).

Positions 81-84 (TDFV) are involved in Mg(2+) ion dislocation from EF-Tu.

Belongs to the EF-Ts family.

Its subcellular location is the cytoplasm. Associates with the EF-Tu.GDP complex and induces the exchange of GDP to GTP. It remains bound to the aminoacyl-tRNA.EF-Tu.GTP complex up to the GTP hydrolysis stage on the ribosome. This is Elongation factor Ts from Campylobacter fetus subsp. fetus (strain 82-40).